The primary structure comprises 122 residues: Large ribosomal subunit protein uL14c (122 aa).

It belongs to the universal ribosomal protein uL14 family. In terms of assembly, part of the 50S ribosomal subunit.

It localises to the plastid. Its subcellular location is the chloroplast. Functionally, binds to 23S rRNA. In Liriodendron tulipifera (Tuliptree), this protein is Large ribosomal subunit protein uL14c.